Here is a 174-residue protein sequence, read N- to C-terminus: UPF0398 protein YfdB (174 aa).

This sequence belongs to the UPF0398 family.

This Lactococcus lactis subsp. lactis (strain IL1403) (Streptococcus lactis) protein is UPF0398 protein YfdB (yfdB).